We begin with the raw amino-acid sequence, 518 residues long: Sensor protein kinase HptS (518 aa).

Transmembrane regions (helical) follow at residues 20–40 (IFPV…IYIW) and 222–242 (GITL…FGFI). The 217-residue stretch at 297–513 (EQLIHSIEHT…LICYKIPLSR (217 aa)) folds into the Histidine kinase domain. Residue His325 is modified to Phosphohistidine; by autocatalysis.

Autophosphorylated.

The protein localises to the cell membrane. The enzyme catalyses ATP + protein L-histidine = ADP + protein N-phospho-L-histidine.. Member of the two-component regulatory system HptS/HptR that regulates genes involved in hexose phosphate transport system in response to changes in extracellular phosphate sources. May act as a sensor protein kinase which is autophosphorylated at a histidine residue and transfers its phosphate group to the conserved aspartic acid residue in the regulatory domain of HptS. In turn, HptS antagonizes CcpA-dependent transcription of a subset of CcpA-regulated genes involved in antibiotic susceptibility. The sequence is that of Sensor protein kinase HptS (hptS) from Staphylococcus aureus (strain bovine RF122 / ET3-1).